The following is a 1193-amino-acid chain: Pyruvate carboxylase (1193 aa).

Residues 41–493 (QFQKILVANR…WTTFIDDTTE (453 aa)) form the Biotin carboxylation domain. Residues Lys159, Glu243, and His278 each contribute to the ATP site. The ATP-grasp domain maps to 163–360 (RQLAIRCNVP…IVAAQIQIAA (198 aa)). Residue Arg335 is part of the active site. A Pyruvate carboxyltransferase domain is found at 579-847 (CLIMDTTWRD…DPGLNSAHVR (269 aa)). Residues 587–591 (RDAHQ) and Arg660 each bind substrate. Position 588 (Asp588) interacts with a divalent metal cation. The a divalent metal cation site is built by Lys756, His786, and His788. The residue at position 756 (Lys756) is an N6-carboxylysine. Position 921 (Thr921) interacts with substrate. Positions 1116–1191 (KADVGDSSQV…DGQDLVCKIT (76 aa)) constitute a Biotinyl-binding domain. Lys1157 is modified (N6-biotinyllysine).

It depends on biotin as a cofactor. The cofactor is Zn(2+).

The protein resides in the cytoplasm. It carries out the reaction hydrogencarbonate + pyruvate + ATP = oxaloacetate + ADP + phosphate + H(+). Its pathway is carbohydrate biosynthesis; gluconeogenesis. Its function is as follows. Pyruvate carboxylase catalyzes a 2-step reaction, involving the ATP-dependent carboxylation of the covalently attached biotin in the first step and the transfer of the carboxyl group to pyruvate in the second. This Aspergillus terreus (strain NIH 2624 / FGSC A1156) protein is Pyruvate carboxylase (pyc).